A 307-amino-acid polypeptide reads, in one-letter code: tRNA dimethylallyltransferase (307 aa).

Residue G9–T16 coordinates ATP. T11–T16 contacts substrate. Residues D34–Q37 are interaction with substrate tRNA.

The protein belongs to the IPP transferase family. As to quaternary structure, monomer. Mg(2+) is required as a cofactor.

The enzyme catalyses adenosine(37) in tRNA + dimethylallyl diphosphate = N(6)-dimethylallyladenosine(37) in tRNA + diphosphate. In terms of biological role, catalyzes the transfer of a dimethylallyl group onto the adenine at position 37 in tRNAs that read codons beginning with uridine, leading to the formation of N6-(dimethylallyl)adenosine (i(6)A). This Limosilactobacillus reuteri (strain DSM 20016) (Lactobacillus reuteri) protein is tRNA dimethylallyltransferase.